A 533-amino-acid polypeptide reads, in one-letter code: Subtilisin-like serine protease pepC (533 aa).

A signal peptide spans Met-1 to Ala-16. One can recognise an Inhibitor I9 domain in the interval Ser-43–Met-136. A Peptidase S8 domain is found at Pro-145–Thr-450. Active-site charge relay system residues include Asp-181 and His-213. N-linked (GlcNAc...) asparagine glycosylation is present at Asn-283. A disulfide bridge connects residues Cys-320 and Cys-351. Residue Ser-379 is the Charge relay system of the active site. Residue Asn-435 is glycosylated (N-linked (GlcNAc...) asparagine). The segment covering Lys-496–Pro-513 has biased composition (polar residues). The tract at residues Lys-496–Glu-519 is disordered.

It belongs to the peptidase S8 family.

The polypeptide is Subtilisin-like serine protease pepC (pepC) (Aspergillus niger).